Consider the following 136-residue polypeptide: Calmodulin-A (136 aa).

4 EF-hand domains span residues 1 to 36, 37 to 72, 74 to 109, and 110 to 136; these read EQIAEFKEAFSLFDKDGDGTITTKELGTVMRSLGQN, PTEAELQDMINEVDADGNGTIDFPEFLTMMARKMKD, DSEEEIREAFRVFDKDGNGYISAAELRHVMTNLGEK, and LTDEEVDEMIREADIDGDGQVNYEEFV. Positions 14, 16, 18, 20, 25, 50, 52, 54, 56, 61, 87, 89, 91, 93, and 98 each coordinate Ca(2+). Residue Lys-109 is modified to N6,N6,N6-trimethyllysine. Residues Asp-123, Asp-125, Asp-127, Gln-129, and Glu-134 each contribute to the Ca(2+) site.

Belongs to the calmodulin family.

Its function is as follows. Calmodulin acts as part of a calcium signal transduction pathway by mediating the control of a large number of enzymes, ion channels, aquaporins and other proteins through calcium-binding. Calcium-binding is required for the activation of calmodulin. Among the enzymes to be stimulated by the calmodulin-calcium complex are a number of protein kinases, such as myosin light-chain kinases and calmodulin-dependent protein kinase type II (CaMK2), and phosphatases. The polypeptide is Calmodulin-A (calm1) (Oryzias latipes (Japanese rice fish)).